The sequence spans 174 residues: Gamma-crystallin A (174 aa).

Beta/gamma crystallin 'Greek key' domains follow at residues 2 to 40 and 41 to 83; these read GKIT…RVDS and GCWM…RSIP. The tract at residues 84-87 is connecting peptide; that stretch reads YTSS. Beta/gamma crystallin 'Greek key' domains follow at residues 88–128 and 129–171; these read HRIR…HVLE and GCWV…RRVM.

Belongs to the beta/gamma-crystallin family.

Functionally, crystallins are the dominant structural components of the vertebrate eye lens. This Mus musculus (Mouse) protein is Gamma-crystallin A (Cryga).